A 198-amino-acid chain; its full sequence is DNA polymerase zeta subunit 2 (198 aa).

The 193-residue stretch at 4 to 196 (EIKADIIVEA…DLGLKMDVLI (193 aa)) folds into the HORMA domain.

This sequence belongs to the MAD2 family. Accessory subunit of the zeta DNA polymerase complex, which consists of the catalytic component PolZ1/DNApol-zeta and PolZ2/Rev7. Interacts with the apurinic/apyrimidinic (AP) endonuclease Rrp1 (via the N-terminus).

As the accessory component of the DNA polymerase zeta complex, involved in translesion DNA synthesis (TLS) and various DNA repair mechanisms. Promotes the apurinic/apyrimidinic (AP) endonuclease activity of Rrp1 and is therefore likely to be involved in the base excision repair (BER) pathway responsible for repair of DNA lesions. It does not appear to influence the synthesis activity of the catalytic component Dmpol-zeta. The polypeptide is DNA polymerase zeta subunit 2 (Drosophila melanogaster (Fruit fly)).